The chain runs to 128 residues: DNA-directed RNA polymerase subunit omega (128 aa).

The protein belongs to the RNA polymerase subunit omega family. The RNAP catalytic core consists of 2 alpha, 1 beta, 1 beta' and 1 omega subunit. When a sigma factor is associated with the core the holoenzyme is formed, which can initiate transcription.

It catalyses the reaction RNA(n) + a ribonucleoside 5'-triphosphate = RNA(n+1) + diphosphate. Functionally, promotes RNA polymerase assembly. Latches the N- and C-terminal regions of the beta' subunit thereby facilitating its interaction with the beta and alpha subunits. The sequence is that of DNA-directed RNA polymerase subunit omega from Neorickettsia sennetsu (strain ATCC VR-367 / Miyayama) (Ehrlichia sennetsu).